Consider the following 1400-residue polypeptide: DNA-directed RNA polymerase subunit beta (1400 aa).

This sequence belongs to the RNA polymerase beta chain family. The RNAP catalytic core consists of 2 alpha, 1 beta, 1 beta' and 1 omega subunit. When a sigma factor is associated with the core the holoenzyme is formed, which can initiate transcription.

The catalysed reaction is RNA(n) + a ribonucleoside 5'-triphosphate = RNA(n+1) + diphosphate. Functionally, DNA-dependent RNA polymerase catalyzes the transcription of DNA into RNA using the four ribonucleoside triphosphates as substrates. In Acidiphilium cryptum (strain JF-5), this protein is DNA-directed RNA polymerase subunit beta.